Here is a 294-residue protein sequence, read N- to C-terminus: Cytidine deaminase (294 aa).

CMP/dCMP-type deaminase domains are found at residues 48-168 (DEDA…FGPK) and 186-294 (VSGD…VLLG). A substrate-binding site is contributed by 89–91 (NME). Position 102 (histidine 102) interacts with Zn(2+). Residue glutamate 104 is the Proton donor of the active site. Zn(2+) contacts are provided by cysteine 129 and cysteine 132.

The protein belongs to the cytidine and deoxycytidylate deaminase family. As to quaternary structure, homodimer. Requires Zn(2+) as cofactor.

The catalysed reaction is cytidine + H2O + H(+) = uridine + NH4(+). It catalyses the reaction 2'-deoxycytidine + H2O + H(+) = 2'-deoxyuridine + NH4(+). Functionally, this enzyme scavenges exogenous and endogenous cytidine and 2'-deoxycytidine for UMP synthesis. The polypeptide is Cytidine deaminase (Klebsiella pneumoniae subsp. pneumoniae (strain ATCC 700721 / MGH 78578)).